Here is a 231-residue protein sequence, read N- to C-terminus: RNA pyrophosphohydrolase (231 aa).

A Nudix hydrolase domain is found at 6–149 (GFRPNVGIIL…KRDVYQLALT (144 aa)). Positions 38-59 (GGIKYGETPEQAMYRELHEEIG) match the Nudix box motif. The disordered stretch occupies residues 168–200 (VHHGRHGSGQRYAQQPGQPPTLAQRRPLQPVTQ).

Belongs to the Nudix hydrolase family. RppH subfamily. Requires a divalent metal cation as cofactor.

Accelerates the degradation of transcripts by removing pyrophosphate from the 5'-end of triphosphorylated RNA, leading to a more labile monophosphorylated state that can stimulate subsequent ribonuclease cleavage. This is RNA pyrophosphohydrolase from Cupriavidus pinatubonensis (strain JMP 134 / LMG 1197) (Cupriavidus necator (strain JMP 134)).